Reading from the N-terminus, the 128-residue chain is Large ribosomal subunit protein bL17 (128 aa).

The protein belongs to the bacterial ribosomal protein bL17 family. Part of the 50S ribosomal subunit. Contacts protein L32.

In Pseudomonas syringae pv. tomato (strain ATCC BAA-871 / DC3000), this protein is Large ribosomal subunit protein bL17.